The sequence spans 248 residues: Probable aquaporin TIP2-2 (248 aa).

Helical transmembrane passes span 21-41 (AYVA…GSAI) and 55-75 (AGLV…VAIG). The NPA 1 signature appears at 84–86 (NPA). 3 consecutive transmembrane segments (helical) span residues 87–109 (VTFG…WIAQ), 133–153 (LSGV…FGLV), and 168–188 (LGTI…LVAG). The NPA 2 signature appears at 196-198 (NPA). The chain crosses the membrane as a helical span at residues 210–230 (YTNIWIYWVGPLVGGGLAGLV).

The protein belongs to the MIP/aquaporin (TC 1.A.8) family. TIP (TC 1.A.8.10) subfamily. As to expression, expressed in roots and leaves.

It is found in the vacuole membrane. Aquaporins facilitate the transport of water and small neutral solutes across cell membranes. May be involved in transport from the vacuolar compartment to the cytoplasm. The sequence is that of Probable aquaporin TIP2-2 (TIP2-2) from Oryza sativa subsp. japonica (Rice).